A 275-amino-acid chain; its full sequence is NH(3)-dependent NAD(+) synthetase (275 aa).

46–53 (GISGGQDS) is a binding site for ATP. Asp52 lines the Mg(2+) pocket. A deamido-NAD(+)-binding site is contributed by Arg140. Thr160 serves as a coordination point for ATP. Glu165 contributes to the Mg(2+) binding site. 2 residues coordinate deamido-NAD(+): Lys173 and Asp180. Residues Lys189 and Thr211 each coordinate ATP. 260–261 (HK) is a deamido-NAD(+) binding site.

It belongs to the NAD synthetase family. Homodimer.

The catalysed reaction is deamido-NAD(+) + NH4(+) + ATP = AMP + diphosphate + NAD(+) + H(+). The protein operates within cofactor biosynthesis; NAD(+) biosynthesis; NAD(+) from deamido-NAD(+) (ammonia route): step 1/1. Its function is as follows. Catalyzes the ATP-dependent amidation of deamido-NAD to form NAD. Uses ammonia as a nitrogen source. This chain is NH(3)-dependent NAD(+) synthetase, found in Enterobacter sp. (strain 638).